Reading from the N-terminus, the 72-residue chain is Translation initiation factor IF-1 (72 aa).

Residues 1 to 72 (MAKEDVIEVE…NRGRIVYRYK (72 aa)) form the S1-like domain.

It belongs to the IF-1 family. In terms of assembly, component of the 30S ribosomal translation pre-initiation complex which assembles on the 30S ribosome in the order IF-2 and IF-3, IF-1 and N-formylmethionyl-tRNA(fMet); mRNA recruitment can occur at any time during PIC assembly.

It is found in the cytoplasm. In terms of biological role, one of the essential components for the initiation of protein synthesis. Stabilizes the binding of IF-2 and IF-3 on the 30S subunit to which N-formylmethionyl-tRNA(fMet) subsequently binds. Helps modulate mRNA selection, yielding the 30S pre-initiation complex (PIC). Upon addition of the 50S ribosomal subunit IF-1, IF-2 and IF-3 are released leaving the mature 70S translation initiation complex. The chain is Translation initiation factor IF-1 from Moorella thermoacetica (strain ATCC 39073 / JCM 9320).